The sequence spans 368 residues: Queuine tRNA-ribosyltransferase (368 aa).

Asp89 (proton acceptor) is an active-site residue. Substrate is bound by residues 89 to 93, Asp143, Gln187, and Gly214; that span reads DSGGF. Residue Asp264 is the Nucleophile of the active site. The tract at residues 269–273 is RNA binding; important for wobble base 34 recognition; sequence TRNAR. Zn(2+) contacts are provided by Cys302, Cys304, Cys307, and His333.

It belongs to the queuine tRNA-ribosyltransferase family. As to quaternary structure, homodimer. Within each dimer, one monomer is responsible for RNA recognition and catalysis, while the other monomer binds to the replacement base PreQ1. It depends on Zn(2+) as a cofactor.

The catalysed reaction is 7-aminomethyl-7-carbaguanine + guanosine(34) in tRNA = 7-aminomethyl-7-carbaguanosine(34) in tRNA + guanine. It participates in tRNA modification; tRNA-queuosine biosynthesis. Catalyzes the base-exchange of a guanine (G) residue with the queuine precursor 7-aminomethyl-7-deazaguanine (PreQ1) at position 34 (anticodon wobble position) in tRNAs with GU(N) anticodons (tRNA-Asp, -Asn, -His and -Tyr). Catalysis occurs through a double-displacement mechanism. The nucleophile active site attacks the C1' of nucleotide 34 to detach the guanine base from the RNA, forming a covalent enzyme-RNA intermediate. The proton acceptor active site deprotonates the incoming PreQ1, allowing a nucleophilic attack on the C1' of the ribose to form the product. After dissociation, two additional enzymatic reactions on the tRNA convert PreQ1 to queuine (Q), resulting in the hypermodified nucleoside queuosine (7-(((4,5-cis-dihydroxy-2-cyclopenten-1-yl)amino)methyl)-7-deazaguanosine). In Blochmanniella pennsylvanica (strain BPEN), this protein is Queuine tRNA-ribosyltransferase.